The sequence spans 325 residues: Biotin synthase (325 aa).

Residues 43 to 262 (CSVETAQLLS…VAVARLLMPR (220 aa)) enclose the Radical SAM core domain. Positions 58, 62, and 65 each coordinate [4Fe-4S] cluster. Cys102, Cys133, Cys193, and Arg266 together coordinate [2Fe-2S] cluster.

It belongs to the radical SAM superfamily. Biotin synthase family. As to quaternary structure, homodimer. [4Fe-4S] cluster is required as a cofactor. Requires [2Fe-2S] cluster as cofactor.

It catalyses the reaction (4R,5S)-dethiobiotin + (sulfur carrier)-SH + 2 reduced [2Fe-2S]-[ferredoxin] + 2 S-adenosyl-L-methionine = (sulfur carrier)-H + biotin + 2 5'-deoxyadenosine + 2 L-methionine + 2 oxidized [2Fe-2S]-[ferredoxin]. Its pathway is cofactor biosynthesis; biotin biosynthesis; biotin from 7,8-diaminononanoate: step 2/2. In terms of biological role, catalyzes the conversion of dethiobiotin (DTB) to biotin by the insertion of a sulfur atom into dethiobiotin via a radical-based mechanism. The chain is Biotin synthase from Azorhizobium caulinodans (strain ATCC 43989 / DSM 5975 / JCM 20966 / LMG 6465 / NBRC 14845 / NCIMB 13405 / ORS 571).